The following is a 105-amino-acid chain: Large ribosomal subunit protein bL21 (105 aa).

It belongs to the bacterial ribosomal protein bL21 family. Part of the 50S ribosomal subunit. Contacts protein L20.

This protein binds to 23S rRNA in the presence of protein L20. In Bacteroides fragilis (strain YCH46), this protein is Large ribosomal subunit protein bL21.